The primary structure comprises 83 residues: Large ribosomal subunit protein bL31B (83 aa).

This sequence belongs to the bacterial ribosomal protein bL31 family. Type B subfamily. In terms of assembly, part of the 50S ribosomal subunit.

The sequence is that of Large ribosomal subunit protein bL31B from Leifsonia xyli subsp. xyli (strain CTCB07).